The primary structure comprises 253 residues: Imidazole glycerol phosphate synthase subunit HisF (253 aa).

Active-site residues include aspartate 11 and aspartate 130.

This sequence belongs to the HisA/HisF family. Heterodimer of HisH and HisF.

The protein localises to the cytoplasm. The catalysed reaction is 5-[(5-phospho-1-deoxy-D-ribulos-1-ylimino)methylamino]-1-(5-phospho-beta-D-ribosyl)imidazole-4-carboxamide + L-glutamine = D-erythro-1-(imidazol-4-yl)glycerol 3-phosphate + 5-amino-1-(5-phospho-beta-D-ribosyl)imidazole-4-carboxamide + L-glutamate + H(+). Its pathway is amino-acid biosynthesis; L-histidine biosynthesis; L-histidine from 5-phospho-alpha-D-ribose 1-diphosphate: step 5/9. IGPS catalyzes the conversion of PRFAR and glutamine to IGP, AICAR and glutamate. The HisF subunit catalyzes the cyclization activity that produces IGP and AICAR from PRFAR using the ammonia provided by the HisH subunit. This chain is Imidazole glycerol phosphate synthase subunit HisF, found in Clostridium botulinum (strain Okra / Type B1).